We begin with the raw amino-acid sequence, 331 residues long: Ketol-acid reductoisomerase (NADP(+)) (331 aa).

One can recognise a KARI N-terminal Rossmann domain in the interval Ala-2–Thr-182. Residues Tyr-25–Gln-28, Ser-51, Ser-53, and Asp-83–Gln-86 each bind NADP(+). The active site involves His-108. Gly-134 lines the NADP(+) pocket. The KARI C-terminal knotted domain maps to Asn-183 to Leu-328. Asp-191, Glu-195, Glu-227, and Glu-231 together coordinate Mg(2+). Ser-252 serves as a coordination point for substrate.

This sequence belongs to the ketol-acid reductoisomerase family. Mg(2+) is required as a cofactor.

The enzyme catalyses (2R)-2,3-dihydroxy-3-methylbutanoate + NADP(+) = (2S)-2-acetolactate + NADPH + H(+). It carries out the reaction (2R,3R)-2,3-dihydroxy-3-methylpentanoate + NADP(+) = (S)-2-ethyl-2-hydroxy-3-oxobutanoate + NADPH + H(+). The protein operates within amino-acid biosynthesis; L-isoleucine biosynthesis; L-isoleucine from 2-oxobutanoate: step 2/4. It participates in amino-acid biosynthesis; L-valine biosynthesis; L-valine from pyruvate: step 2/4. Involved in the biosynthesis of branched-chain amino acids (BCAA). Catalyzes an alkyl-migration followed by a ketol-acid reduction of (S)-2-acetolactate (S2AL) to yield (R)-2,3-dihydroxy-isovalerate. In the isomerase reaction, S2AL is rearranged via a Mg-dependent methyl migration to produce 3-hydroxy-3-methyl-2-ketobutyrate (HMKB). In the reductase reaction, this 2-ketoacid undergoes a metal-dependent reduction by NADPH to yield (R)-2,3-dihydroxy-isovalerate. The protein is Ketol-acid reductoisomerase (NADP(+)) of Prochlorococcus marinus (strain MIT 9303).